Reading from the N-terminus, the 426-residue chain is Pannexin-1 (426 aa).

Topologically, residues 1–40 (MAIAHLATEYVFSDFLLKEPTEPKFKGLRLELAVDKMVTC) are cytoplasmic. Cys40 is modified (S-nitrosocysteine). Residues 41–61 (IAVGLPLLLISLAFAQEISIG) traverse the membrane as a helical segment. Topologically, residues 62-106 (TQISCFSPSSFSWRQAAFVDSYCWAAVQQKSSLQSESGNLPLWLH) are extracellular. Cystine bridges form between Cys66–Cys264 and Cys84–Cys245. A helical transmembrane segment spans residues 107-127 (KFFPYILLLFAILLYLPALFW). Topologically, residues 128–216 (RFSAAPHLCS…HLIMKYISCR (89 aa)) are cytoplasmic. A Phosphotyrosine modification is found at Tyr198. A helical transmembrane segment spans residues 217–237 (LVTFVVILLACIYLSYYFSLS). Topologically, residues 238-277 (SLSDEFLCSIKSGVLKNDSTIPDRFQCKLIAVGIFQLLSL) are extracellular. Residue Asn254 is glycosylated (N-linked (GlcNAc...) asparagine). Residues 278-298 (INLIVYALLIPVVVYTFFIPF) form a helical membrane-spanning segment. Residues 299–426 (RQKTDILKVY…SRQRLLNPSC (128 aa)) lie on the Cytoplasmic side of the membrane. An S-nitrosocysteine modification is found at Cys346.

This sequence belongs to the pannexin family. As to quaternary structure, homoheptameric. S-nitrosylation inhibits channel currents and ATP release. Post-translationally, N-glycosylation may play a role in cell surface targeting. Exists in three glycosylation states: non-glycosylated (GLY0), high-mannose glycosylated (GLY1), and fully mature glycosylated (GLY2). In terms of processing, phosphorylated at Tyr-198 by SRC. Phosphorylation activates ATP release. Constitutively phosphorylated in vascular smooth muscle cells. Cleaved by CASP3 and CASP7 during apoptosis. Cleavage opens the channel for the release of metabolites and induces plasma membrane permeability during apoptosis. As to expression, widely expressed, including in cartilage, skin, spleen and brain.

It is found in the cell membrane. The protein localises to the endoplasmic reticulum membrane. The catalysed reaction is chloride(in) = chloride(out). It catalyses the reaction iodide(out) = iodide(in). The enzyme catalyses Ca(2+)(in) = Ca(2+)(out). It carries out the reaction ATP(in) = ATP(out). The catalysed reaction is K(+)(in) = K(+)(out). It catalyses the reaction Na(+)(in) = Na(+)(out). The enzyme catalyses nitrate(in) = nitrate(out). It carries out the reaction L-aspartate(out) = L-aspartate(in). The catalysed reaction is L-glutamate(out) = L-glutamate(in). It catalyses the reaction D-gluconate(in) = D-gluconate(out). The enzyme catalyses spermidine(in) = spermidine(out). Ion channel involved in a variety of physiological functions such as blood pressure regulation, apoptotic cell clearance and oogenesis. Forms anion-selective channels with relatively low conductance and an order of permeabilities: nitrate&gt;iodide&gt;chlroride&gt;&gt;aspartate=glutamate=gluconate. Can release ATP upon activation through phosphorylation or cleavage at C-terminus. May play a role as a Ca(2+)-leak channel to regulate ER Ca(2+) homeostasis. Its function is as follows. During apoptosis and after cleavage by caspases of the C-terminal tail, acts as a plasma membrane channel which mediates the regulated release of find-me signals, such as nucleotides ATP and UTP, and selective plasme membrane permeability. The protein is Pannexin-1 of Mus musculus (Mouse).